The primary structure comprises 944 residues: Isoleucine--tRNA ligase (944 aa).

The short motif at 58–68 is the 'HIGH' region element; that stretch reads PYANGQIHIGH. An L-isoleucyl-5'-AMP-binding site is contributed by glutamate 568. The 'KMSKS' region motif lies at 609–613; sequence KMSKS. Lysine 612 is a binding site for ATP. Cysteine 907, cysteine 910, cysteine 927, and cysteine 930 together coordinate Zn(2+).

Belongs to the class-I aminoacyl-tRNA synthetase family. IleS type 1 subfamily. Monomer. Zn(2+) serves as cofactor.

The protein localises to the cytoplasm. It catalyses the reaction tRNA(Ile) + L-isoleucine + ATP = L-isoleucyl-tRNA(Ile) + AMP + diphosphate. In terms of biological role, catalyzes the attachment of isoleucine to tRNA(Ile). As IleRS can inadvertently accommodate and process structurally similar amino acids such as valine, to avoid such errors it has two additional distinct tRNA(Ile)-dependent editing activities. One activity is designated as 'pretransfer' editing and involves the hydrolysis of activated Val-AMP. The other activity is designated 'posttransfer' editing and involves deacylation of mischarged Val-tRNA(Ile). The chain is Isoleucine--tRNA ligase from Idiomarina loihiensis (strain ATCC BAA-735 / DSM 15497 / L2-TR).